The primary structure comprises 521 residues: MTQDKILILDFGSQVTRLIARRVREAHVYCELHSFDMPLDEIKAFNPKGIILSGGPNSVYESDYQADTGIFDLGIPVLGICYGMQFMAHHLGGEVQPGNQREFGYAQVKTIDSGLTRGIQDDAPNTLDVWMSHGDKVSKLPDGFAVIGDTPSCPIAMMENAEKQFYGIQFHPEVTHTKQGRALLNRFVLDICGAQPGWTMPNYIEEAVAKIREQVGSDEVILGLSGGVDSSVAAALIHRAIGDQLTCVFVDHGLLRLNEGKMVMDMFARNLGVKVIHVDAEGQFMAKLAGVTDPEKKRKIIGAEFIEVFDAEEKKLTNAKWLAQGTIYPDVIESAGAKTKKAHAIKSHHNVGGLPENMKLKLLEPLRDLFKDEVRELGVALGLPREMVYRHPFPGPGLGVRILGEVKKEYADLLRQADDIFIQELRNTTDENGTSWYDLTSQAFAVFLPVKSVGVMGDGRTYDYVVALRAVITSDFMTAHWAELPYSLLGRVSNRIINEVKGINRVVYDVSGKPPATIEWE.

Positions K5–G197 constitute a Glutamine amidotransferase type-1 domain. Catalysis depends on C81, which acts as the Nucleophile. Catalysis depends on residues H171 and E173. The GMPS ATP-PPase domain occupies W198 to R390. S225–S231 serves as a coordination point for ATP.

Homodimer.

The catalysed reaction is XMP + L-glutamine + ATP + H2O = GMP + L-glutamate + AMP + diphosphate + 2 H(+). It participates in purine metabolism; GMP biosynthesis; GMP from XMP (L-Gln route): step 1/1. Its function is as follows. Catalyzes the synthesis of GMP from XMP. This Neisseria gonorrhoeae (strain ATCC 700825 / FA 1090) protein is GMP synthase [glutamine-hydrolyzing].